We begin with the raw amino-acid sequence, 942 residues long: Nuclear receptor coactivator 7 (942 aa).

Residue Met1 is modified to N-acetylmethionine. Positions 1 to 12 (MDTKEEKKERKQ) are enriched in basic and acidic residues. Residues 1–46 (MDTKEEKKERKQSYFARLKKKKQAKQNAETASAVATRTHTGKEDNN) form a disordered region. A coiled-coil region spans residues 4–29 (KEEKKERKQSYFARLKKKKQAKQNAE). Polar residues predominate over residues 25–38 (KQNAETASAVATRT). Ser89 carries the post-translational modification Phosphoserine. Residues 114 to 157 (MEYTAGNQDTLNSIALKFNITPNKLVELNKLFTHTIVPGQVLFV) form the LysM domain. Position 134 is a phosphothreonine (Thr134). Positions 161–188 (NSPSSTLRLSSSSPGATVSPSSSDAEYD) are disordered. The span at 162–183 (SPSSTLRLSSSSPGATVSPSSS) shows a compositional bias: low complexity. A phosphoserine mark is found at Ser179, Ser183, Ser208, Ser209, and Ser211. The tract at residues 324–416 (KFKSINKEKR…ENFLGEDDDF (93 aa)) is disordered. The span at 356–368 (GHTPTKPSGSSVS) shows a compositional bias: polar residues. Residues 369 to 381 (EKLKKLDSSRETS) show a composition bias toward basic and acidic residues. Ser441, Ser500, and Ser502 each carry phosphoserine. The region spanning 781 to 942 (ALLENMHIEQ…VQDLEVWAFD (162 aa)) is the TLDc domain.

It belongs to the OXR1 family. In terms of assembly, interacts with ESR1, ESR2A, ESR2B, THRB, PPARG and RARA in a ligand-inducible manner. Interacts with the heterodimer AHR-ARNT. Highly expressed in brain. Weakly expressed in mammary gland, ovary, uterus, prostate, stomach, bladder, spinal cord and pancreas. Expressed in cancer cell line.

It is found in the nucleus. Enhances the transcriptional activities of several nuclear receptors. Involved in the coactivation of different nuclear receptors, such as ESR1, THRB, PPARG and RARA. The polypeptide is Nuclear receptor coactivator 7 (NCOA7) (Homo sapiens (Human)).